The chain runs to 335 residues: Biotin synthase (335 aa).

One can recognise a Radical SAM core domain in the interval 46 to 274 (YKVQLASLFS…KSKIRLSAGR (229 aa)). [4Fe-4S] cluster is bound by residues Cys61, Cys65, and Cys68. Positions 105, 137, 197, and 269 each coordinate [2Fe-2S] cluster.

Belongs to the radical SAM superfamily. Biotin synthase family. As to quaternary structure, homodimer. [4Fe-4S] cluster serves as cofactor. The cofactor is [2Fe-2S] cluster.

It catalyses the reaction (4R,5S)-dethiobiotin + (sulfur carrier)-SH + 2 reduced [2Fe-2S]-[ferredoxin] + 2 S-adenosyl-L-methionine = (sulfur carrier)-H + biotin + 2 5'-deoxyadenosine + 2 L-methionine + 2 oxidized [2Fe-2S]-[ferredoxin]. The protein operates within cofactor biosynthesis; biotin biosynthesis; biotin from 7,8-diaminononanoate: step 2/2. Its function is as follows. Catalyzes the conversion of dethiobiotin (DTB) to biotin by the insertion of a sulfur atom into dethiobiotin via a radical-based mechanism. The protein is Biotin synthase of Prochlorococcus marinus subsp. pastoris (strain CCMP1986 / NIES-2087 / MED4).